An 804-amino-acid chain; its full sequence is Tegument protein UL47 homolog (804 aa).

Basic residues predominate over residues 1–15 (MQSGHYNRRQSRRQR). Disordered stretches follow at residues 1-42 (MQSG…THPP) and 58-206 (LNSE…DYFS). The Nuclear localization signal signature appears at 11 to 31 (SRRQRISSNTTDSPRHTHGTR). A compositionally biased stretch (polar residues) spans 32–42 (YRSTNWYTHPP). Positions 62-72 (MDQDSSSDASD) are enriched in acidic residues. Residues 82–93 (STYNGSEQNTST) are compositionally biased toward polar residues. Residues 94–109 (SRHENRIFKLTEREAN) are compositionally biased toward basic and acidic residues. 3 consecutive repeat copies span residues 117–132 (DAIDDEGEAEEGEAEE), 133–148 (DAIDDEGEAEEGEAEE), and 149–164 (DAIDDEGEAEEGEAEE). The 6 X 16 AA approximate tandem repeats stretch occupies residues 117–203 (DAIDDEGEAE…IDDEGEAEED (87 aa)). Positions 118-204 (AIDDEGEAEE…DDEGEAEEDY (87 aa)) are enriched in acidic residues. A 1-4; truncated repeat occupies 170-180 (DAIDDEGEAEE). One copy of the 1-5; truncated repeat lies at 181-191 (DAIDDEGEAEE). The stretch at 192-203 (DAIDDEGEAEED) is one 1-6; truncated repeat. A Nuclear export signal motif is present at residues 770-792 (QPIPSVDLAENLMQYRNEILGLD).

It belongs to the alphaherpesvirinae HHV-1 UL47 family. As to quaternary structure, interacts with US3 kinase. Interacts with ORF24 and ORF27; these interactions seem important for efficient virion nuclear egress. Interacts with ORF17/VHS. Phosphorylated by US3. This phosphorylation is required for proper nuclear localization.

It is found in the virion tegument. Its subcellular location is the host nucleus. The protein resides in the host cytoplasm. Functionally, tegument protein that can bind to various RNA transcripts. Plays a role in the attenuation of selective viral and cellular mRNA degradation by modulating the activity of host shutoff RNase ORF17/VHS. Also plays a role in the primary envelopment of virions in the perinuclear space, probably by interacting with two nuclear egress proteins ORF24 and ORF27. The polypeptide is Tegument protein UL47 homolog (Varicella-zoster virus (strain Oka vaccine) (HHV-3)).